The sequence spans 60 residues: MDSTLLEIVACPICHGRLALDQTSQKLVCHFDKVAYDINQGIPVLLAEQAMPLSARQEEP.

Belongs to the UPF0434 family.

This Pasteurella multocida (strain Pm70) protein is UPF0434 protein PM0859.